The following is a 317-amino-acid chain: Transaldolase (317 aa).

Lysine 132 functions as the Schiff-base intermediate with substrate in the catalytic mechanism.

The protein belongs to the transaldolase family. Type 1 subfamily. In terms of assembly, homodimer.

It is found in the cytoplasm. The catalysed reaction is D-sedoheptulose 7-phosphate + D-glyceraldehyde 3-phosphate = D-erythrose 4-phosphate + beta-D-fructose 6-phosphate. The protein operates within carbohydrate degradation; pentose phosphate pathway; D-glyceraldehyde 3-phosphate and beta-D-fructose 6-phosphate from D-ribose 5-phosphate and D-xylulose 5-phosphate (non-oxidative stage): step 2/3. Transaldolase is important for the balance of metabolites in the pentose-phosphate pathway. The chain is Transaldolase from Edwardsiella ictaluri (strain 93-146).